Reading from the N-terminus, the 370-residue chain is Probable dual-specificity RNA methyltransferase RlmN (370 aa).

Residue E91 is the Proton acceptor of the active site. In terms of domain architecture, Radical SAM core spans 97–329 (QHYGLSVCVT…KKNGVNCVVR (233 aa)). C104 and C340 are joined by a disulfide. 3 residues coordinate [4Fe-4S] cluster: C111, C115, and C118. Residues 163–164 (GE), S195, 218–220 (SLH), and N296 each bind S-adenosyl-L-methionine. The active-site S-methylcysteine intermediate is C340.

Belongs to the radical SAM superfamily. RlmN family. Requires [4Fe-4S] cluster as cofactor.

Its subcellular location is the cytoplasm. The catalysed reaction is adenosine(2503) in 23S rRNA + 2 reduced [2Fe-2S]-[ferredoxin] + 2 S-adenosyl-L-methionine = 2-methyladenosine(2503) in 23S rRNA + 5'-deoxyadenosine + L-methionine + 2 oxidized [2Fe-2S]-[ferredoxin] + S-adenosyl-L-homocysteine. It carries out the reaction adenosine(37) in tRNA + 2 reduced [2Fe-2S]-[ferredoxin] + 2 S-adenosyl-L-methionine = 2-methyladenosine(37) in tRNA + 5'-deoxyadenosine + L-methionine + 2 oxidized [2Fe-2S]-[ferredoxin] + S-adenosyl-L-homocysteine. Its function is as follows. Specifically methylates position 2 of adenine 2503 in 23S rRNA and position 2 of adenine 37 in tRNAs. This is Probable dual-specificity RNA methyltransferase RlmN from Streptococcus suis (strain 98HAH33).